Consider the following 102-residue polypeptide: Thioredoxin (102 aa).

The 101-residue stretch at 2–102 folds into the Thioredoxin domain; sequence VTEIKSLKQL…KAKIVQLVSQ (101 aa). Residues Cys30 and Cys33 are joined by a disulfide bond.

Belongs to the thioredoxin family.

Functionally, participates in various redox reactions through the reversible oxidation of its active center dithiol to a disulfide and catalyzes dithiol-disulfide exchange reactions. The protein is Thioredoxin (trxA) of Mycoplasma pneumoniae (strain ATCC 29342 / M129 / Subtype 1) (Mycoplasmoides pneumoniae).